The following is a 237-amino-acid chain: Phosphoribosylaminoimidazole-succinocarboxamide synthase (237 aa).

Belongs to the SAICAR synthetase family.

The catalysed reaction is 5-amino-1-(5-phospho-D-ribosyl)imidazole-4-carboxylate + L-aspartate + ATP = (2S)-2-[5-amino-1-(5-phospho-beta-D-ribosyl)imidazole-4-carboxamido]succinate + ADP + phosphate + 2 H(+). Its pathway is purine metabolism; IMP biosynthesis via de novo pathway; 5-amino-1-(5-phospho-D-ribosyl)imidazole-4-carboxamide from 5-amino-1-(5-phospho-D-ribosyl)imidazole-4-carboxylate: step 1/2. The sequence is that of Phosphoribosylaminoimidazole-succinocarboxamide synthase from Idiomarina loihiensis (strain ATCC BAA-735 / DSM 15497 / L2-TR).